The chain runs to 448 residues: Divalent metal cation transporter MntH (448 aa).

The next 11 membrane-spanning stretches (helical) occupy residues 41-61 (LFAF…PGNW), 69-89 (SEFG…AVLL), 117-137 (GFVL…AEVI), 147-167 (FGIP…LVLF), 176-196 (IEVI…AEMV), 215-235 (IVTN…TVMP), 270-290 (FSLT…AAAF), 307-327 (LLNP…ALLA), 363-383 (VLAI…GINE), 384-404 (LLIF…IPLV), and 424-444 (IVSW…LFYT).

Belongs to the NRAMP family.

The protein localises to the cell membrane. In terms of biological role, h(+)-stimulated, divalent metal cation uptake system. The chain is Divalent metal cation transporter MntH from Listeria innocua serovar 6a (strain ATCC BAA-680 / CLIP 11262).